The sequence spans 626 residues: tRNA uridine 5-carboxymethylaminomethyl modification enzyme MnmG (626 aa).

13–18 provides a ligand contact to FAD; it reads GGGHAG. 273 to 287 provides a ligand contact to NAD(+); it reads GPRYCPSIEDKIHRF.

It belongs to the MnmG family. In terms of assembly, homodimer. Heterotetramer of two MnmE and two MnmG subunits. It depends on FAD as a cofactor.

The protein localises to the cytoplasm. NAD-binding protein involved in the addition of a carboxymethylaminomethyl (cmnm) group at the wobble position (U34) of certain tRNAs, forming tRNA-cmnm(5)s(2)U34. The polypeptide is tRNA uridine 5-carboxymethylaminomethyl modification enzyme MnmG (Acinetobacter baumannii (strain AB307-0294)).